The sequence spans 236 residues: 1-(5-phosphoribosyl)-5-[(5-phosphoribosylamino)methylideneamino] imidazole-4-carboxamide isomerase (236 aa).

The active-site Proton acceptor is Asp8. Asp127 (proton donor) is an active-site residue.

The protein belongs to the HisA/HisF family.

It is found in the cytoplasm. It carries out the reaction 1-(5-phospho-beta-D-ribosyl)-5-[(5-phospho-beta-D-ribosylamino)methylideneamino]imidazole-4-carboxamide = 5-[(5-phospho-1-deoxy-D-ribulos-1-ylimino)methylamino]-1-(5-phospho-beta-D-ribosyl)imidazole-4-carboxamide. It functions in the pathway amino-acid biosynthesis; L-histidine biosynthesis; L-histidine from 5-phospho-alpha-D-ribose 1-diphosphate: step 4/9. In Campylobacter hominis (strain ATCC BAA-381 / DSM 21671 / CCUG 45161 / LMG 19568 / NCTC 13146 / CH001A), this protein is 1-(5-phosphoribosyl)-5-[(5-phosphoribosylamino)methylideneamino] imidazole-4-carboxamide isomerase.